A 371-amino-acid polypeptide reads, in one-letter code: tRNA-specific 2-thiouridylase MnmA (371 aa).

Residues 16 to 23 (GMSGGVDS) and methionine 42 contribute to the ATP site. The segment at 102 to 104 (NPD) is interaction with target base in tRNA. Cysteine 107 serves as the catalytic Nucleophile. The cysteines at positions 107 and 204 are disulfide-linked. Glycine 132 is an ATP binding site. The interval 154-156 (KDQ) is interaction with tRNA. Cysteine 204 serves as the catalytic Cysteine persulfide intermediate. Residues 316-317 (RY) form an interaction with tRNA region.

Belongs to the MnmA/TRMU family.

The protein localises to the cytoplasm. It carries out the reaction S-sulfanyl-L-cysteinyl-[protein] + uridine(34) in tRNA + AH2 + ATP = 2-thiouridine(34) in tRNA + L-cysteinyl-[protein] + A + AMP + diphosphate + H(+). In terms of biological role, catalyzes the 2-thiolation of uridine at the wobble position (U34) of tRNA, leading to the formation of s(2)U34. The sequence is that of tRNA-specific 2-thiouridylase MnmA from Shewanella piezotolerans (strain WP3 / JCM 13877).